Reading from the N-terminus, the 766-residue chain is Nucleolar complex protein 2 (766 aa).

Basic residues predominate over residues 1 to 12; that stretch reads MKLATKKIKTLG. Disordered stretches follow at residues 1–73, 100–154, and 674–766; these read MKLA…EELE, DTDD…DEED, and KTGV…LNEW. Residues 14 to 29 show a composition bias toward basic and acidic residues; sequence SKPDLSKKKPAKDAIR. The span at 33–42 shows a compositional bias: polar residues; the sequence is PQTTSETKVT. Residues 58–67 are compositionally biased toward basic residues; sequence KTTKKGFKKS. Over residues 100-115 the composition is skewed to acidic residues; it reads DTDDDDDEEGDEEDKE. Position 101 is a phosphothreonine (T101). Basic and acidic residues predominate over residues 130 to 140; the sequence is EKYHKPSKDLE. The segment covering 141–154 has biased composition (acidic residues); the sequence is VASDESDFEVDEED. Phosphoserine is present on residues S143, S146, S691, S693, and S705. The segment covering 706 to 720 has biased composition (acidic residues); that stretch reads DDDDDEDVQEEEEVE. The span at 757-766 shows a compositional bias: basic and acidic residues; sequence IVKDLDLNEW.

It belongs to the NOC2 family.

It is found in the nucleus. The protein is Nucleolar complex protein 2 of Drosophila melanogaster (Fruit fly).